A 207-amino-acid polypeptide reads, in one-letter code: ATP-dependent dethiobiotin synthetase BioD (207 aa).

Glutamate 13–valine 18 contacts ATP. Threonine 17 serves as a coordination point for Mg(2+). Lysine 33 is a catalytic residue. Residues aspartate 44 and glutamate 100 to glycine 103 contribute to the ATP site. Positions 44 and 100 each coordinate Mg(2+).

The protein belongs to the dethiobiotin synthetase family. Homodimer. It depends on Mg(2+) as a cofactor.

The protein localises to the cytoplasm. The catalysed reaction is (7R,8S)-7,8-diammoniononanoate + CO2 + ATP = (4R,5S)-dethiobiotin + ADP + phosphate + 3 H(+). The protein operates within cofactor biosynthesis; biotin biosynthesis; biotin from 7,8-diaminononanoate: step 1/2. Catalyzes a mechanistically unusual reaction, the ATP-dependent insertion of CO2 between the N7 and N8 nitrogen atoms of 7,8-diaminopelargonic acid (DAPA, also called 7,8-diammoniononanoate) to form a ureido ring. The protein is ATP-dependent dethiobiotin synthetase BioD of Christiangramia forsetii (strain DSM 17595 / CGMCC 1.15422 / KT0803) (Gramella forsetii).